Here is a 7067-residue protein sequence, read N- to C-terminus: Replicase polyprotein 1ab (7067 aa).

The region spanning Thr-12–Gly-127 is the CoV Nsp1 globular domain. The 32-residue stretch at Glu-148–Gly-179 folds into the BetaCoV Nsp1 C-terminal domain. The 274-residue stretch at Thr-183 to Arg-456 folds into the CoV Nsp2 N-terminal domain. Residues Cys-200, Cys-231, His-234, His-236, Cys-323, Cys-326, Cys-341, Cys-344, Cys-370, Cys-373, His-382, and Cys-416 each coordinate Zn(2+). The interval Cys-200–His-236 is C2H2. Residues Cys-323 to Cys-344 form a C4 region. A C2HC region spans residues Cys-370–Cys-416. The region spanning Arg-458 to Met-688 is the CoV Nsp2 middle domain. Residues Leu-690–Gly-818 enclose the CoV Nsp2 C-terminal domain. The 109-residue stretch at Lys-822–Glu-930 folds into the Ubiquitin-like 1 domain. 3 Macro domains span residues Val-998 to Leu-1164, Lys-1201 to Glu-1329, and Val-1337 to Ser-1464. The 67-residue stretch at Thr-1466 to Ser-1532 folds into the DPUP domain. Residues Val-1536–Val-1591 enclose the Ubiquitin-like 2 domain. The 265-residue stretch at Tyr-1605–Gly-1869 folds into the Peptidase C16 domain. Residue Cys-1645 is the For PL-PRO activity of the active site. 4 residues coordinate Zn(2+): Cys-1723, Cys-1726, Cys-1758, and Cys-1760. The C4-type zinc finger occupies Cys-1723–Cys-1760. Catalysis depends on for PL-PRO activity residues His-1806 and Asp-1820. One can recognise a Nucleic acid-binding domain in the interval Pro-1882–Thr-1992. Residues Thr-2017 to Asn-2126 enclose the G2M domain. The HD1 stretch occupies residues Leu-2086 to Trp-2365. A helical transmembrane segment spans residues Leu-2197–Val-2217. The 3Ecto domain maps to Thr-2218–Asp-2288. Disulfide bonds link Cys-2234/Cys-2262 and Cys-2253/Cys-2259. 2 helical membrane passes run Trp-2298–Met-2318 and Met-2345–Trp-2365. A Y1 region spans residues Lys-2366–Asp-2456. Residues Lys-2366–Gly-2734 enclose the CoV Nsp3 Y domain. Zn(2+) is bound by residues His-2370, Cys-2375, Cys-2380, Cys-2383, Cys-2416, His-2419, Cys-2423, and Cys-2426. The tract at residues His-2370–Cys-2383 is ZF1. The tract at residues Cys-2416–Cys-2426 is ZF2. Positions Gln-2457–Val-2551 are Y2. Residues Gln-2457 to Gly-2734 are coV-Y. The Y3 stretch occupies residues Gly-2552–Asp-2633. A Y4 region spans residues Ile-2634–Gly-2734. The next 7 helical transmembrane spans lie at Leu-2744–Val-2764, Pro-2986–Val-3006, Ala-3016–Met-3036, Val-3048–Ala-3068, Phe-3071–Val-3091, Trp-3099–Ile-3119, and Val-3136–Leu-3156. The segment at Leu-2749 to Leu-3156 is HD2. The region spanning Val-3136–Gln-3234 is the Nsp4C domain. The Peptidase C30 domain occupies Ser-3235–Gln-3540. Residues His-3275 and Cys-3379 each act as for 3CL-PRO activity in the active site. 7 helical membrane passes run Phe-3558–Tyr-3578, Asn-3580–Val-3600, Phe-3606–Met-3626, Asp-3652–Tyr-3672, Val-3679–Leu-3698, Ile-3722–Ile-3742, and Ile-3750–Leu-3770. Residues Phe-3558–Leu-3770 form an HD3 region. Residues Ser-3831–Gln-3913 form the RdRp Nsp7 cofactor domain. Residues Ala-3914 to Gln-4111 form the RdRp Nsp8 cofactor domain. In terms of domain architecture, Nsp9 ssRNA-binding spans Asn-4112–Gln-4224. The 139-residue stretch at Ala-4225–Gln-4363 folds into the ExoN/MTase coactivator domain. Cys-4298, Cys-4301, His-4307, Cys-4314, Cys-4341, Cys-4344, Cys-4352, and Cys-4354 together coordinate Zn(2+). 2 zinc fingers span residues Cys-4298–Cys-4314 and Cys-4341–Cys-4354. The region spanning Phe-4370 to Leu-4624 is the NiRAN domain. Mn(2+) is bound by residues Asn-4572 and Asp-4581. The region spanning Val-4629–Ser-4727 is the Nsp12 Interface domain. Residues His-4658, Cys-4664, Cys-4669, Cys-4673, and Cys-4850 each contribute to the Zn(2+) site. The 568-residue stretch at Arg-4728–Gln-5295 folds into the Nsp12 RNA-dependent RNA polymerase domain. Positions Ser-4730–Ala-4944 are rdRp Fingers N-ter. Residues Thr-4945 to Pro-4983 are rdRp Palm N-ter. Positions Pro-4975 to Gly-5137 constitute a RdRp catalytic domain. The interval Lys-4984–Gly-5042 is rdRp Fingers C-ter. 3 residues coordinate Zn(2+): His-5005, Cys-5008, and Cys-5009. Residues Thr-5043 to Gln-5178 form a rdRp Palm C-ter region. Active-site residues include Ser-5122, Asp-5123, and Asp-5124. The rdRp Thumb stretch occupies residues His-5179 to Gln-5295. In terms of domain architecture, CV ZBD spans Ala-5296–Asp-5408. Cys-5300, Cys-5303, Cys-5311, Cys-5314, Cys-5321, Cys-5324, His-5328, His-5334, Cys-5345, Cys-5350, Cys-5367, and His-5370 together coordinate Zn(2+). The (+)RNA virus helicase ATP-binding domain maps to Asn-5552–Leu-5733. Gly-5577–Ser-5584 is a binding site for ATP. Residues Gly-5734–Leu-5903 form the (+)RNA virus helicase C-terminal domain. One can recognise an ExoN domain in the interval Met-5968–Val-6183. Residues Asp-5986, Glu-5988, and Glu-6087 contribute to the active site. Residues Cys-6103, Cys-6106, Cys-6122, His-6125, His-6153, Cys-6157, and His-6160 each contribute to the Zn(2+) site. Active-site residues include His-6164 and Asp-6169. Cys-6175 is a binding site for Zn(2+). The 232-residue stretch at Tyr-6192 to Gln-6423 folds into the N7-MTase domain. Position 6227-6233 (Asp-6227–Ala-6233) interacts with S-adenosyl-L-methionine. Residues Cys-6310–Thr-6324 are gpppA-binding. Residues Cys-6348, Cys-6369, Cys-6380, and His-6383 each coordinate Zn(2+). The Nsp15 N-terminal oligomerization domain occupies Ser-6424–Arg-6484. The region spanning Asn-6485–Gln-6610 is the AV-Nsp11N/CoV-Nsp15M domain. Residues Lys-6627–Pro-6766 form the NendoU domain. Catalysis depends on residues His-6657, His-6672, Lys-6712, Lys-6815, Asp-6899, Lys-6939, and Glu-6972. Residues Ser-6771–Val-7065 form the Nidovirus-type SAM-dependent 2'-O-MTase domain.

The protein belongs to the coronaviruses polyprotein 1ab family. As to quaternary structure, interacts with host PHB and PHB2. In terms of assembly, interacts with papain-like protease nsp3 and non-structural protein 6. Monomer. Homodimer. Only the homodimer shows catalytic activity. As to quaternary structure, interacts with nsp8 and nsp12 to form the replication-transcription complex (RTC): nsp12, nsp7, two subunits of nsp8, and up to two subunits of nsp13. In terms of assembly, interacts with nsp7, nsp13 and nsp12 to form the replication-transcription complex (RTC): nsp12, nsp7, two subunits of nsp8, and up to two subunits of nsp13. Interacts with nsp12. As to quaternary structure, interacts with proofreading exoribonuclease nsp14 and 2'-O-methyltransferase nsp16; these interactions enhance nsp14 and nsp16 enzymatic activities. In terms of assembly, interacts with nsp7 and nsp8 to form the replication-transcription complex (RTC): nsp12, nsp7, two subunits of nsp8, and up to two subunits of nsp13. Interacts with nsp9. Interacts with nsp8 to form the replication-transcription complex (RTC): nsp12, nsp7, two subunits of nsp8, and up to two subunits of nsp13. It depends on Mn(2+) as a cofactor. Requires Mg(2+) as cofactor. In terms of processing, specific enzymatic cleavages in vivo by its own proteases yield mature proteins. 3CL-PRO and PL-PRO proteinases are autocatalytically processed.

It localises to the host membrane. The protein resides in the host cytoplasm. Its subcellular location is the host perinuclear region. The protein localises to the host endoplasmic reticulum-Golgi intermediate compartment. It catalyses the reaction RNA(n) + a ribonucleoside 5'-triphosphate = RNA(n+1) + diphosphate. The catalysed reaction is ATP + H2O = ADP + phosphate + H(+). It carries out the reaction Thiol-dependent hydrolysis of ester, thioester, amide, peptide and isopeptide bonds formed by the C-terminal Gly of ubiquitin (a 76-residue protein attached to proteins as an intracellular targeting signal).. The enzyme catalyses a 5'-end (N(7)-methyl 5'-triphosphoguanosine)-ribonucleoside in mRNA + S-adenosyl-L-methionine = a 5'-end (N(7)-methyl 5'-triphosphoguanosine)-(2'-O-methyl-ribonucleoside) in mRNA + S-adenosyl-L-homocysteine + H(+). It catalyses the reaction uridylyl-uridylyl-ribonucleotide-RNA = a 3'-end uridylyl-2',3'-cyclophospho-uridine-RNA + a 5'-end dephospho-ribonucleoside-RNA. The catalysed reaction is a 5'-end diphospho-ribonucleoside in mRNA + GTP + H(+) = a 5'-end (5'-triphosphoguanosine)-ribonucleoside in mRNA + diphosphate. It carries out the reaction a 5'-end (5'-triphosphoguanosine)-ribonucleoside in mRNA + S-adenosyl-L-methionine = a 5'-end (N(7)-methyl 5'-triphosphoguanosine)-ribonucleoside in mRNA + S-adenosyl-L-homocysteine. Its function is as follows. The replicase polyprotein of coronaviruses is a multifunctional protein: it contains the activities necessary for the transcription of negative stranded RNA, leader RNA, subgenomic mRNAs and progeny virion RNA as well as proteinases responsible for the cleavage of the polyprotein into functional products. Inhibits host translation by interacting with the 40S ribosomal subunit. The nsp1-40S ribosome complex further induces an endonucleolytic cleavage near the 5'UTR of host mRNAs, targeting them for degradation. Viral mRNAs are not susceptible to nsp1-mediated endonucleolytic RNA cleavage thanks to the presence of a 5'-end leader sequence and are therefore protected from degradation. By suppressing host gene expression, nsp1 facilitates efficient viral gene expression in infected cells and evasion from host immune response. In terms of biological role, may play a role in the modulation of host cell survival signaling pathway by interacting with host PHB and PHB2. Indeed, these two proteins play a role in maintaining the functional integrity of the mitochondria and protecting cells from various stresses. Functionally, responsible for the cleavages located at the N-terminus of the replicase polyprotein. In addition, PL-PRO possesses a deubiquitinating/deISGylating activity and processes both 'Lys-48'- and 'Lys-63'-linked polyubiquitin chains from cellular substrates. Participates together with nsp4 in the assembly of virally-induced cytoplasmic double-membrane vesicles necessary for viral replication. Antagonizes innate immune induction of type I interferon by blocking the phosphorylation, dimerization and subsequent nuclear translocation of host IRF3. Also prevents host NF-kappa-B signaling. Its function is as follows. Participates in the assembly of virally-induced cytoplasmic double-membrane vesicles necessary for viral replication. Cleaves the C-terminus of replicase polyprotein at 11 sites. Recognizes substrates containing the core sequence [ILMVF]-Q-|-[SGACN]. Also able to bind an ADP-ribose-1''-phosphate (ADRP). In terms of biological role, plays a role in the initial induction of autophagosomes from host endoplasmic reticulum. Later, limits the expansion of these phagosomes that are no longer able to deliver viral components to lysosomes. Functionally, forms a hexadecamer with nsp8 (8 subunits of each) that may participate in viral replication by acting as a primase. Alternatively, may synthesize substantially longer products than oligonucleotide primers. Its function is as follows. Forms a hexadecamer with nsp7 (8 subunits of each) that may participate in viral replication by acting as a primase. Alternatively, may synthesize substantially longer products than oligonucleotide primers. Forms a primer, NSP9-pU, which is utilized by the polymerase for the initiation of RNA chains. Interacts with ribosome signal recognition particle RNA (SRP). Together with NSP8, suppress protein integration into the cell membrane, thereby disrupting host immune defenses. In terms of biological role, plays a pivotal role in viral transcription by stimulating both nsp14 3'-5' exoribonuclease and nsp16 2'-O-methyltransferase activities. Therefore plays an essential role in viral mRNAs cap methylation. Functionally, RNA-directed RNA polymerase that catalyzes the transcription of viral genomic and subgenomic RNAs. Acts in complex with nsp7 and nsp8 to transcribe both the minus and positive strands of genomic RNA. The kinase-like NiRAN domain of NSP12 attaches one or more nucleotides to the amino terminus of NSP9, forming a covalent RNA-protein intermediate that serves as transcription/replication primer. Subgenomic RNAs (sgRNAs) are formed by discontinuous transcription: The polymerase has the ability to pause at transcription-regulating sequences (TRS) and jump to the leader TRS, resulting in a major deletion. This creates a series of subgenomic RNAs that are replicated, transcribed and translated. In addition, Nsp12 is a subunit of the viral RNA capping enzyme that catalyzes the RNA guanylyltransferase reaction for genomic and sub-genomic RNAs. Subsequently, the NiRAN domain transfers RNA to GDP, and forms the core cap structure GpppA-RNA. Its function is as follows. Multi-functional protein with a zinc-binding domain in N-terminus displaying RNA and DNA duplex-unwinding activities with 5' to 3' polarity. Activity of helicase is dependent on magnesium. Plays a role in viral RNA synthesis through two distinct activities. The N7-guanine methyltransferase activity plays a role in the formation of the cap structure GpppA-RNA. The proofreading exoribonuclease reduces the sensitivity of the virus to RNA mutagens during replication. This activity acts on both ssRNA and dsRNA in a 3'-5' direction. In terms of biological role, plays a role in viral transcription/replication and prevents the simultaneous activation of host cell dsRNA sensors, such as MDA5/IFIH1, OAS, and PKR. Acts by degrading the 5'-polyuridines generated during replication of the poly(A) region of viral genomic and subgenomic RNAs. Catalyzes a two-step reaction in which a 2'3'-cyclic phosphate (2'3'-cP) is first generated by 2'-O transesterification, which is then hydrolyzed to a 3'-phosphate (3'-P). If not degraded, poly(U) RNA would hybridize with poly(A) RNA tails and activate host dsRNA sensors. Functionally, methyltransferase that mediates mRNA cap 2'-O-ribose methylation to the 5'-cap structure of viral mRNAs. N7-methyl guanosine cap is a prerequisite for binding of nsp16. Therefore plays an essential role in viral mRNAs cap methylation which is essential to evade immune system. The protein is Replicase polyprotein 1ab (rep) of Bat coronavirus HKU3 (BtCoV).